A 67-amino-acid chain; its full sequence is DNA-directed RNA polymerase subunit omega (67 aa).

Belongs to the RNA polymerase subunit omega family. As to quaternary structure, the RNAP catalytic core consists of 2 alpha, 1 beta, 1 beta' and 1 omega subunit. When a sigma factor is associated with the core the holoenzyme is formed, which can initiate transcription.

It carries out the reaction RNA(n) + a ribonucleoside 5'-triphosphate = RNA(n+1) + diphosphate. In terms of biological role, promotes RNA polymerase assembly. Latches the N- and C-terminal regions of the beta' subunit thereby facilitating its interaction with the beta and alpha subunits. This chain is DNA-directed RNA polymerase subunit omega, found in Polynucleobacter asymbioticus (strain DSM 18221 / CIP 109841 / QLW-P1DMWA-1) (Polynucleobacter necessarius subsp. asymbioticus).